Reading from the N-terminus, the 230-residue chain is Somatolactin (230 aa).

The signal sequence occupies residues Met1–Ser23. Cystine bridges form between Cys28-Cys38, Cys88-Cys204, and Cys221-Cys229. 2 N-linked (GlcNAc...) asparagine glycosylation sites follow: Asn34 and Asn144.

It belongs to the somatotropin/prolactin family. As to expression, pituitary gland.

It localises to the secreted. In Solea senegalensis (Senegalese sole), this protein is Somatolactin.